Here is a 176-residue protein sequence, read N- to C-terminus: Translation initiation factor IF-3 (176 aa).

The protein belongs to the IF-3 family. Monomer.

Its subcellular location is the cytoplasm. Its function is as follows. IF-3 binds to the 30S ribosomal subunit and shifts the equilibrium between 70S ribosomes and their 50S and 30S subunits in favor of the free subunits, thus enhancing the availability of 30S subunits on which protein synthesis initiation begins. The protein is Translation initiation factor IF-3 of Microcystis aeruginosa (strain NIES-843 / IAM M-2473).